The chain runs to 440 residues: Xylose isomerase (440 aa).

Residues His-101 and Asp-104 contribute to the active site. Glu-232, Glu-268, His-271, Asp-296, Asp-307, Asp-309, and Asp-339 together coordinate Mg(2+).

Belongs to the xylose isomerase family. In terms of assembly, homotetramer. Mg(2+) is required as a cofactor.

It is found in the cytoplasm. The enzyme catalyses alpha-D-xylose = alpha-D-xylulofuranose. This is Xylose isomerase from Salmonella agona (strain SL483).